The primary structure comprises 359 residues: 3-dehydroquinate synthase (359 aa).

NAD(+)-binding positions include 72-77, 106-110, 130-131, K143, K152, and 170-173; these read DGEQYK, GVIGD, TT, and CLKT. Residues E185, H248, and H265 each contribute to the Zn(2+) site.

The protein belongs to the sugar phosphate cyclases superfamily. Dehydroquinate synthase family. It depends on Co(2+) as a cofactor. Zn(2+) serves as cofactor. The cofactor is NAD(+).

Its subcellular location is the cytoplasm. It carries out the reaction 7-phospho-2-dehydro-3-deoxy-D-arabino-heptonate = 3-dehydroquinate + phosphate. The protein operates within metabolic intermediate biosynthesis; chorismate biosynthesis; chorismate from D-erythrose 4-phosphate and phosphoenolpyruvate: step 2/7. Functionally, catalyzes the conversion of 3-deoxy-D-arabino-heptulosonate 7-phosphate (DAHP) to dehydroquinate (DHQ). The chain is 3-dehydroquinate synthase from Photobacterium profundum (strain SS9).